Reading from the N-terminus, the 535-residue chain is EH domain-containing protein 3 (535 aa).

Met-1 is modified (N-acetylmethionine). One can recognise a Dynamin-type G domain in the interval Phe-55–Pro-286. The interval Gly-65–Thr-72 is G1 motif. Gly-65 to Thr-72 is a binding site for ATP. Positions Glu-91 to Pro-92 are G2 motif. Positions Asp-153–Gly-156 are G3 motif. A coiled-coil region spans residues Asp-198–Gln-227. The tract at residues Asn-219 to Asp-222 is G4 motif. Lys-220 is a binding site for ATP. Position 243 (Ile-243) is a region of interest, G5 motif. Trp-258 is a binding site for ATP. A Glycyl lysine isopeptide (Lys-Gly) (interchain with G-Cter in SUMO) cross-link involves residue Lys-315. A phosphoserine mark is found at Ser-349 and Ser-456. Residues Asp-444–Lys-532 enclose the EH domain. In terms of domain architecture, EF-hand spans Leu-476–Lys-511. Residues Asp-489, Asp-491, Asp-493, Met-495, and Glu-500 each coordinate Ca(2+). Residue Lys-511 forms a Glycyl lysine isopeptide (Lys-Gly) (interchain with G-Cter in SUMO) linkage.

It belongs to the TRAFAC class dynamin-like GTPase superfamily. Dynamin/Fzo/YdjA family. EHD subfamily. As to quaternary structure, homooligomer, and heterooligomer with EHD1, EHD2 and EHD4, ATP-binding is required for heterooligomerization. Interacts with PACSIN1. Interacts with PACSIN2. Interacts (via EH domain) with MICALL1. Interacts (via EH domain) with RAB11FIP2. Interacts with ANK2. Interacts with CACNA1GG and CACNA1H.

It localises to the recycling endosome membrane. It is found in the cell membrane. The protein resides in the cell projection. The protein localises to the cilium membrane. ATP- and membrane-binding protein that controls membrane reorganization/tubulation upon ATP hydrolysis. In vitro causes tubulation of endocytic membranes. Binding to phosphatidic acid induces its membrane tubulation activity. Plays a role in endocytic transport. Involved in early endosome to recycling endosome compartment (ERC), retrograde early endosome to Golgi, and endosome to plasma membrane (rapid recycling) protein transport. Involved in the regulation of Golgi maintenance and morphology. Involved in the recycling of internalized D1 dopamine receptor. Plays a role in cardiac protein trafficking probably implicating ANK2. Involved in the ventricular membrane targeting of SLC8A1 and CACNA1C and probably the atrial membrane localization of CACNA1GG and CACNA1H implicated in the regulation of atrial myocyte excitability and cardiac conduction. In conjunction with EHD4 may be involved in endocytic trafficking of KDR/VEGFR2 implicated in control of glomerular function. Involved in the rapid recycling of integrin beta-3 implicated in cell adhesion maintenance. Involved in the unidirectional retrograde dendritic transport of endocytosed BACE1 and in efficient sorting of BACE1 to axons implicating a function in neuronal APP processing. Plays a role in the formation of the ciliary vesicle, an early step in cilium biogenesis; possibly sharing redundant functions with Ehd1. The sequence is that of EH domain-containing protein 3 from Rattus norvegicus (Rat).